A 123-amino-acid chain; its full sequence is Cholecystokinin (123 aa).

The first 19 residues, methionine 1–cysteine 19, serve as a signal peptide directing secretion. The propeptide occupies leucine 20–arginine 103. A disordered region spans residues histidine 43–serine 67. A Sulfotyrosine modification is found at tyrosine 105. Phenylalanine 111 carries the post-translational modification Phenylalanine amide. Residues serine 115–serine 123 constitute a propeptide that is removed on maturation. A sulfotyrosine mark is found at tyrosine 119 and tyrosine 121.

It belongs to the gastrin/cholecystokinin family. In terms of processing, the precursor is cleaved by proteases to produce a number of active cholecystokinins. Expressed in the ovary, kidney, gill, gastrointestinal tract and pituitary. Differentially expressed in the brain in the optic tectum-thalamus, hypothalamus, telencephalon, olfactory bulb and tract, preoptic region and posterior brain region. Expression is strongest in the hypothalamus, where localization is to the posterior ventrolateral region. Expression in the brain is transiently increased 2 hours after feeding. Abundant in the sensory layers of the vagal lobe and along the border of the sensory region of the lobe and the deep fiber laye. Also present in the facial lobe and throughout the glossopharyngeal lobe.

It localises to the secreted. This peptide hormone induces gall bladder contraction and the release of pancreatic enzymes in the gut. Induces the secretion of gonadotropin and growth hormone from the pituitary. Suppresses food intake and decreases the expression of preprosomatostatin genes in the forebrain. The polypeptide is Cholecystokinin (cck) (Carassius auratus (Goldfish)).